The primary structure comprises 1381 residues: MASNEGVENRPFPYLTVDADLLSNLRQSAAEGLFHSFDLLVGKDAREAGIKFEVLLGVYTNAIQYVRFLETALAVSCVNTEFKDLSRMTDGKIQFRISVPTIAHGDGRRPSKQRTFIVVKNCHKHHISTEMELSMLDLEILHSIPETPVEYAEYVGAVKTVASALQFGVDALERGLINTVLSVKLRHAPPMFILQTLADPTFTERGFSKTVKSDLIAMFKRHLLEHSFFLDRAENMGSGFSQYVRSRLSEMVAAVSGESVLKGVSTYTTAKGGEPVGGVFIVTDNVLRQLLTFLGEEADNQIMGPSSYASFVVRGENLVTAVSYGRVMRTFEHFMARIVDSPEKAGSTKSDLPAVAAGVEDQPRVPISAAVIKLGNHAVAVESLQKMYNDTQSPYPLNRRMQYSYYFPVGLFMPNPKYTTSAAIKMLDNPTQQLPVEAWIVNKNNLLLAFNLQNALKVLCHPRLHTPAHTLNSLNAAPAPRDRRETYSLQHRRPNHMNVLVIVDEFYDNKYAAPVTDIALKCGLPTEDFLHPSNYDLLRLELHPLYDIYIGRDAGERARHRAVHRLMVGNLPTPLAPAAFQEARGQQFETATSLAHVVDQAVIETVQDTAYDTAYPAFFYVVEAMIHGFEEKFVMNVPLVSLCINTYWERSGRLAFVNSFSMIKFICRHLGNNAISKEAYSMYRKIYGELIALEQALMRLAGSDVVGDESVGQYVCALLDPNLLPPVAYTDIFTHLLTVSDRAPQIIIGNEVYADTLAAPQFIERVGNMDEMAAQFVALYGYRVNGDHDHDFRLHLGPYVDEGHADVLEKIFYYVFLPTCTNAHMCGLGVDFQHVAQTLAYNGPAFSHHFTRDEDILDNLENGTLRDLLEISDLRPTVGMIRDLSASFMTCPTFTRAVRVSVDNDVTQQLAPNPADKRTEQTVLVNGLVAFAFSERTRAVTQCLFHAIPFHMFYGDPRVAATMHQDVATFVMRNPQQRAVEAFNRPEQLFAEYREWHRSPMGKYAAECLPSLVSISGMTAMHIKMSPMAYIAQAKLKIHPGVAMTVVRTDEILSENILFSSRASTSMFIGTPNVSRREARVDAVTFEVHHEMASIDTGLSYSSTMTPARVAAITTDMGIHTQDFFSVFPAEAFGNQQVNDYIKAKVGAQRNGTLLRDPRTYLAGMTNVNGAPGLCHGQQATCEIIVTPVTADVAYFQKSNSPRGRAACVVSCENYNQEVAEGLIYDHSRPDAAYEYRSTVNPWASQLGSLGDIMYNSSYRQTAVPGLYSPCRAFFNKEELLRNNRGLYNMVNEYSQRLGGHPATSNTEVQFVVIAGTDVFLEQPCSFLQEAFPALSASSRALIDEFMSVKQTHAPIHYGHYIIEEVAPVRRILKFGNKVVF.

The protein belongs to the herpesviridae major capsid protein family. As to quaternary structure, homomultimer. Makes the hexons and eleven out of twelve pentons. Interacts with triplex proteins 1/TRX1 and 2/TRX2; adjacent capsomers are linked together in groups of three by triplexes, heterotrimeric complexes composed of one molecule of TRX1 and two molecules of TRX2. Interacts with scaffold protein; this interaction allows efficient MCP transport to the host nucleus. Interacts with capsid vertex component 2/CVC2. Interacts with the small capsomere-interacting protein/SCP.

It localises to the virion. Its subcellular location is the host nucleus. Functionally, self-assembles to form an icosahedral capsid with a T=16 symmetry, about 200 nm in diameter, and consisting of 150 hexons and 12 pentons (total of 162 capsomers). Hexons form the edges and faces of the capsid and are each composed of six MCP molecules. In contrast, one penton is found at each of the 12 vertices. Eleven of the pentons are MCP pentamers, while the last vertex is occupied by the portal complex. The capsid is surrounded by a layer of proteinaceous material designated the tegument which, in turn, is enclosed in an envelope of host cell-derived lipids containing virus-encoded glycoproteins. In Epstein-Barr virus (strain B95-8) (HHV-4), this protein is Major capsid protein.